Consider the following 552-residue polypeptide: Glutamine--tRNA ligase (552 aa).

The 'HIGH' region signature appears at 34-44; sequence PEPNGYLHIGH. ATP-binding positions include 35–37 and 41–47; these read EPN and HIGHAKS. The L-glutamine site is built by D67 and Y212. ATP contacts are provided by residues T231, 261 to 262, and 269 to 271; these read RL and MSK. Positions 268-272 match the 'KMSKS' region motif; the sequence is VMSKR.

Belongs to the class-I aminoacyl-tRNA synthetase family. As to quaternary structure, monomer.

Its subcellular location is the cytoplasm. The enzyme catalyses tRNA(Gln) + L-glutamine + ATP = L-glutaminyl-tRNA(Gln) + AMP + diphosphate. The sequence is that of Glutamine--tRNA ligase from Aliivibrio fischeri (strain MJ11) (Vibrio fischeri).